The primary structure comprises 218 residues: Enhancer of split M2 protein (218 aa).

Low complexity predominate over residues Met-1–Lys-25. Disordered regions lie at residues Met-1–Met-30, Asn-64–Pro-86, and Gly-137–Ala-164. A compositionally biased stretch (low complexity) spans Ser-147–Ser-163.

Its function is as follows. Part of the Notch signaling pathway. This chain is Enhancer of split M2 protein, found in Drosophila melanogaster (Fruit fly).